Here is a 689-residue protein sequence, read N- to C-terminus: Beta-galactosidase BbgII (689 aa).

The substrate site is built by arginine 122 and asparagine 160. Glutamate 161 acts as the Proton donor in catalysis. Glutamate 320 acts as the Nucleophile in catalysis. Substrate-binding positions include tryptophan 328 and 368-371 (EKWH).

It belongs to the glycosyl hydrolase 42 family.

The catalysed reaction is Hydrolysis of terminal non-reducing beta-D-galactose residues in beta-D-galactosides.. In Bifidobacterium bifidum (strain DSM 20082 / JCM 1254 / BCRC 11844 / KCTC 3440 / E319f (Variant a)), this protein is Beta-galactosidase BbgII.